The primary structure comprises 225 residues: Lipoarabinomannan carrier protein LprG (225 aa).

An N-terminal signal peptide occupies residues 1-21 (MRNRIRLALIPVAVAAIALAG). Cysteine 22 is lipidated: N-palmitoyl cysteine. Cysteine 22 carries S-diacylglycerol cysteine lipidation.

Belongs to the LppX/LprAFG lipoprotein family. In terms of processing, modified by Lgt on Cys-22 with an S-linked diacylglyceral, signal peptide is removed by LspA, Cys-22 is further modifed with a fatty acid on its amino group by Lnt yielding a triacylated protein.

The protein localises to the cell inner membrane. In terms of biological role, helps membrane protein MAB_2807 (P55) transport triacylglycerides (TAG) across the inner cell membrane into the periplasm and probably ultimately to the outer membrane. Binds TAG in its hydrophobic cavity and transfers it between lipid bilayers. TAG probably regulates lipid metabolism and growth regulation and plays a structural role in the outer membrane. Also binds mannosides, lipoarabinomannan and lipomannan and various glycolipids in the same cavity. The protein is Lipoarabinomannan carrier protein LprG of Mycobacteroides abscessus (strain ATCC 19977 / DSM 44196 / CCUG 20993 / CIP 104536 / JCM 13569 / NCTC 13031 / TMC 1543 / L948) (Mycobacterium abscessus).